Here is a 320-residue protein sequence, read N- to C-terminus: Beta-ketoacyl-[acyl-carrier-protein] synthase III (320 aa).

Residues Cys-112 and His-245 contribute to the active site. The segment at Gln-246 to Arg-250 is ACP-binding. Residue Asn-275 is part of the active site.

This sequence belongs to the thiolase-like superfamily. FabH family. In terms of assembly, homodimer.

The protein localises to the cytoplasm. It carries out the reaction malonyl-[ACP] + acetyl-CoA + H(+) = 3-oxobutanoyl-[ACP] + CO2 + CoA. Its pathway is lipid metabolism; fatty acid biosynthesis. Catalyzes the condensation reaction of fatty acid synthesis by the addition to an acyl acceptor of two carbons from malonyl-ACP. Catalyzes the first condensation reaction which initiates fatty acid synthesis and may therefore play a role in governing the total rate of fatty acid production. Possesses both acetoacetyl-ACP synthase and acetyl transacylase activities. Its substrate specificity determines the biosynthesis of branched-chain and/or straight-chain of fatty acids. This chain is Beta-ketoacyl-[acyl-carrier-protein] synthase III, found in Streptococcus thermophilus (strain ATCC BAA-250 / LMG 18311).